Consider the following 754-residue polypeptide: Elongation factor G-1, mitochondrial (754 aa).

Residues 1–17 (MARFPTSPAPNRLLRLF) constitute a mitochondrion transit peptide. Residues 63–340 (DKLRNIGISA…GVVSFLPSPN (278 aa)) form the tr-type G domain. Residues 72 to 79 (AHIDSGKT), 139 to 143 (DTPGH), and 193 to 196 (NKLD) contribute to the GTP site.

The protein belongs to the TRAFAC class translation factor GTPase superfamily. Classic translation factor GTPase family. EF-G/EF-2 subfamily. In terms of tissue distribution, expressed in cotyledons and adult leaves at the same levels.

It is found in the mitochondrion. Its pathway is protein biosynthesis; polypeptide chain elongation. Mitochondrial GTPase that catalyzes the GTP-dependent ribosomal translocation step during translation elongation. During this step, the ribosome changes from the pre-translocational (PRE) to the post-translocational (POST) state as the newly formed A-site-bound peptidyl-tRNA and P-site-bound deacylated tRNA move to the P and E sites, respectively. Catalyzes the coordinated movement of the two tRNA molecules, the mRNA and conformational changes in the ribosome. The chain is Elongation factor G-1, mitochondrial (MEFG1) from Arabidopsis thaliana (Mouse-ear cress).